A 193-amino-acid polypeptide reads, in one-letter code: MPKGCLVITVSGLAGSGTTTLCRNLAKHYGFKHIYAGLIFRQMAKEMGMTLEEFQKYVELHPEIDREIDRRQIEAAKECNVVIEGRLAGWMVKNADLKIWLDAPIMERAKRVAKREGISVEEAFVKIAEREKQNRKRYLNLYGIDIEDKSIYDLIINTAHWGPDGVFAIVKAAIDHLSPSGDAGEDEKEKEVG.

12 to 20 contacts ATP; it reads GLAGSGTTT.

Belongs to the cytidylate kinase family. Type 2 subfamily.

It localises to the cytoplasm. The catalysed reaction is CMP + ATP = CDP + ADP. The enzyme catalyses dCMP + ATP = dCDP + ADP. In Thermococcus kodakarensis (strain ATCC BAA-918 / JCM 12380 / KOD1) (Pyrococcus kodakaraensis (strain KOD1)), this protein is Cytidylate kinase.